We begin with the raw amino-acid sequence, 623 residues long: UvrABC system protein C (623 aa).

Residues 12-91 enclose the GIY-YIG domain; that stretch reads FSPGVYLYKD…IKQYKPRFNI (80 aa). The UVR domain maps to 201 to 236; that stretch reads SDLARGLRARMEAASLEMRFEEAAGLRDLITTVEEI. The disordered stretch occupies residues 604-623; the sequence is PVASVAQSEDAAPDVPDPQA.

This sequence belongs to the UvrC family. Interacts with UvrB in an incision complex.

Its subcellular location is the cytoplasm. In terms of biological role, the UvrABC repair system catalyzes the recognition and processing of DNA lesions. UvrC both incises the 5' and 3' sides of the lesion. The N-terminal half is responsible for the 3' incision and the C-terminal half is responsible for the 5' incision. The protein is UvrABC system protein C of Solibacter usitatus (strain Ellin6076).